A 481-amino-acid polypeptide reads, in one-letter code: NADH-quinone oxidoreductase subunit N (481 aa).

Helical transmembrane passes span 11 to 31 (AYPE…DLFA), 37 to 57 (YLAF…TCGI), 74 to 94 (AMSD…LIYS), 103 to 123 (LLKG…MVMV), 128 to 148 (LITL…MVAL), 162 to 182 (FFVL…MLYG), 205 to 225 (IFII…SAVP), 238 to 258 (PTAV…GFVM), 272 to 292 (WQGM…IAAI), 300 to 320 (MLAY…IAAG), 328 to 348 (MFYV…IMLV), 371 to 391 (LAFM…MIGF), 405 to 425 (GYIW…FYYL), and 457 to 477 (LAII…LSAI).

It belongs to the complex I subunit 2 family. As to quaternary structure, NDH-1 is composed of 14 different subunits. Subunits NuoA, H, J, K, L, M, N constitute the membrane sector of the complex.

Its subcellular location is the cell inner membrane. It carries out the reaction a quinone + NADH + 5 H(+)(in) = a quinol + NAD(+) + 4 H(+)(out). In terms of biological role, NDH-1 shuttles electrons from NADH, via FMN and iron-sulfur (Fe-S) centers, to quinones in the respiratory chain. The immediate electron acceptor for the enzyme in this species is believed to be ubiquinone. Couples the redox reaction to proton translocation (for every two electrons transferred, four hydrogen ions are translocated across the cytoplasmic membrane), and thus conserves the redox energy in a proton gradient. This is NADH-quinone oxidoreductase subunit N from Nitrosomonas europaea (strain ATCC 19718 / CIP 103999 / KCTC 2705 / NBRC 14298).